We begin with the raw amino-acid sequence, 463 residues long: uncharacterized protein (463 aa).

A run of 11 helical transmembrane segments spans residues isoleucine 6 to leucine 26, threonine 31 to alanine 51, phenylalanine 60 to methionine 80, valine 101 to tryptophan 123, leucine 130 to alanine 152, alanine 189 to isoleucine 209, serine 242 to phenylalanine 262, alanine 269 to tyrosine 289, glycine 304 to leucine 324, alanine 413 to cysteine 433, and lysine 443 to leucine 463.

Its subcellular location is the cell membrane. This is an uncharacterized protein from Bacillus subtilis (strain 168).